The following is a 422-amino-acid chain: Serine--tRNA ligase (422 aa).

229–231 (TAE) contributes to the L-serine binding site. Residue 258-260 (RRE) participates in ATP binding. Glutamate 281 serves as a coordination point for L-serine. An ATP-binding site is contributed by 345–348 (EISS). Serine 379 contacts L-serine.

The protein belongs to the class-II aminoacyl-tRNA synthetase family. Type-1 seryl-tRNA synthetase subfamily. Homodimer. The tRNA molecule binds across the dimer.

The protein resides in the cytoplasm. It carries out the reaction tRNA(Ser) + L-serine + ATP = L-seryl-tRNA(Ser) + AMP + diphosphate + H(+). The enzyme catalyses tRNA(Sec) + L-serine + ATP = L-seryl-tRNA(Sec) + AMP + diphosphate + H(+). Its pathway is aminoacyl-tRNA biosynthesis; selenocysteinyl-tRNA(Sec) biosynthesis; L-seryl-tRNA(Sec) from L-serine and tRNA(Sec): step 1/1. Catalyzes the attachment of serine to tRNA(Ser). Is also able to aminoacylate tRNA(Sec) with serine, to form the misacylated tRNA L-seryl-tRNA(Sec), which will be further converted into selenocysteinyl-tRNA(Sec). The polypeptide is Serine--tRNA ligase (Methanosarcina mazei (strain ATCC BAA-159 / DSM 3647 / Goe1 / Go1 / JCM 11833 / OCM 88) (Methanosarcina frisia)).